The chain runs to 951 residues: Valine--tRNA ligase (951 aa).

The 'HIGH' region signature appears at 42 to 52 (PNVTGSLHMGH). The short motif at 554–558 (KMSKS) is the 'KMSKS' region element. Residue Lys557 coordinates ATP. Positions 880–944 (AGLINKEDEL…AEAKAKLIEQ (65 aa)) form a coiled coil.

It belongs to the class-I aminoacyl-tRNA synthetase family. ValS type 1 subfamily. As to quaternary structure, monomer.

The protein resides in the cytoplasm. It carries out the reaction tRNA(Val) + L-valine + ATP = L-valyl-tRNA(Val) + AMP + diphosphate. Functionally, catalyzes the attachment of valine to tRNA(Val). As ValRS can inadvertently accommodate and process structurally similar amino acids such as threonine, to avoid such errors, it has a 'posttransfer' editing activity that hydrolyzes mischarged Thr-tRNA(Val) in a tRNA-dependent manner. The sequence is that of Valine--tRNA ligase from Escherichia coli O6:H1 (strain CFT073 / ATCC 700928 / UPEC).